The sequence spans 759 residues: Nucleolar RNA helicase 2-A (759 aa).

The tract at residues 1–154 (MPVKVYAEEM…KKRKTDTTEI (154 aa)) is disordered. A compositionally biased stretch (acidic residues) spans 77–86 (ETAEECDGEQ). Positions 179–207 (GDFSKFPLSKETIKNLQAKGVSYLFPIQS) match the Q motif motif. The Helicase ATP-binding domain maps to 210-389 (FHTAYSGKDV…KKYMRKQFEK (180 aa)). 223–230 (ARTGTGKT) contacts ATP. Positions 332–335 (DEVD) match the DEAD box motif. One can recognise a Helicase C-terminal domain in the interval 422 to 566 (DLVQVYSGSH…VGVPSLLNVA (145 aa)). A disordered region spans residues 709-759 (QESERNFDGPRNRGFGGRGRRPFDRRNNSRNSNRGGGGRGRNRNGGFRRGR). Over residues 710–719 (ESERNFDGPR) the composition is skewed to basic and acidic residues. Residues 748–759 (GRNRNGGFRRGR) are compositionally biased toward basic residues.

The protein belongs to the DEAD box helicase family. DDX21/DDX50 subfamily. As to expression, widely expressed. Expressed at higher level in stomach. Expressed at higher level compared to ddx21-b.

Its subcellular location is the nucleus. It localises to the nucleolus. It is found in the nucleoplasm. The protein localises to the cytoplasm. The protein resides in the cytosol. Its subcellular location is the mitochondrion. The catalysed reaction is ATP + H2O = ADP + phosphate + H(+). Functionally, RNA helicase that acts as a sensor of the transcriptional status of both RNA polymerase (Pol) I and II: promotes ribosomal RNA (rRNA) processing and transcription from polymerase II (Pol II). Binds various RNAs, such as rRNAs, snoRNAs, 7SK and, at lower extent, mRNAs. In the nucleolus, localizes to rDNA locus, where it directly binds rRNAs and snoRNAs, and promotes rRNA transcription, processing and modification. Required for rRNA 2'-O-methylation, possibly by promoting the recruitment of late-acting snoRNAs SNORD56 and SNORD58 with pre-ribosomal complexes. In the nucleoplasm, binds 7SK RNA and is recruited to the promoters of Pol II-transcribed genes: acts by facilitating the release of P-TEFb from inhibitory 7SK snRNP in a manner that is dependent on its helicase activity, thereby promoting transcription of its target genes. Required to prevent R-loop-associated DNA damage and transcription-associated genomic instability. In Xenopus laevis (African clawed frog), this protein is Nucleolar RNA helicase 2-A (ddx21-a).